A 1022-amino-acid chain; its full sequence is Sodium/potassium-transporting ATPase subunit alpha-1 (1022 aa).

A propeptide spanning residues 1–5 (MGRGT) is cleaved from the precursor. Positions 1–10 (MGRGTGHDQY) are enriched in basic and acidic residues. The disordered stretch occupies residues 1 to 34 (MGRGTGHDQYELAATSEGGRKKKRDKKKKDMDDL). Topologically, residues 6–86 (GHDQYELAAT…NALTPPPTTP (81 aa)) are cytoplasmic. Phosphoserine; by PKC is present on S16. Positions 81 to 83 (PPP) are interaction with phosphoinositide-3 kinase. A helical membrane pass occupies residues 87–107 (EWVKFCRQLFGGFSMLLWIGA). Topologically, residues 108 to 130 (ILCFLAYGIQAASEDEPANDNLY) are extracellular. The helical transmembrane segment at 131 to 151 (LGVVLSAVVIITGCFSYYQEA) threads the bilayer. Topologically, residues 152–287 (KSSRIMDSFK…VGRTPISIEI (136 aa)) are cytoplasmic. A disordered region spans residues 213–234 (DNSSLTGESEPQTRSPDFSNEN). Residues 288–307 (EHFIHIITGVAVFLGVSFFI) traverse the membrane as a helical segment. Over 308–319 (LSLILGYAWLEA) the chain is Extracellular. A helical membrane pass occupies residues 320 to 337 (VIFLIGIIVANVPEGLLA). The Cytoplasmic portion of the chain corresponds to 338-771 (TVTVCLTLTA…EEGRLIFDNL (434 aa)). Catalysis depends on D375, which acts as the 4-aspartylphosphate intermediate. K486 is a binding site for ATP. Mg(2+) is bound by residues D716 and D720. A helical transmembrane segment spans residues 772-791 (KKSIAYTLTSNIPEITPFLL). Topologically, residues 792-801 (FIIANIPLPL) are extracellular. The helical transmembrane segment at 802–822 (GTVTILCIDLGTDMVPAISLA) threads the bilayer. Residues 823–842 (YEAAESDIMKRQPRNPRTDK) are Cytoplasmic-facing. The chain crosses the membrane as a helical span at residues 843–865 (LVNERLISIAYGQIGMMQATAGF). Topologically, residues 866–917 (FTYFVILAENGFLPSTLLGIRVKWDDKYVNDLEDSYGQQWTYEQRKIVEYTC) are extracellular. A helical membrane pass occupies residues 918–937 (HTSFFASIVIVQWADLIICK). Topologically, residues 938-950 (TRRNSIIQQGMKN) are cytoplasmic. At S942 the chain carries Phosphoserine; by PKA. The helical transmembrane segment at 951-969 (KILIFGLFEETALAAFLSY) threads the bilayer. At 970 to 984 (CPGMDVALRMYPLKP) the chain is on the extracellular side. Residues 985–1005 (SWWFCAFPYSLLIFLYDEARR) form a helical membrane-spanning segment. Topologically, residues 1006–1022 (FILRRNPDGWVERETYY) are cytoplasmic.

The protein belongs to the cation transport ATPase (P-type) (TC 3.A.3) family. Type IIC subfamily. As to quaternary structure, the sodium/potassium-transporting ATPase is composed of a catalytic alpha subunit, an auxiliary non-catalytic beta subunit and an additional regulatory subunit.

It localises to the cell membrane. The protein localises to the sarcolemma. The catalysed reaction is K(+)(out) + Na(+)(in) + ATP + H2O = K(+)(in) + Na(+)(out) + ADP + phosphate + H(+). This is the catalytic component of the active enzyme, which catalyzes the hydrolysis of ATP coupled with the exchange of sodium and potassium ions across the plasma membrane. This action creates the electrochemical gradient of sodium and potassium ions, providing the energy for active transport of various nutrients. The protein is Sodium/potassium-transporting ATPase subunit alpha-1 (atp1a1) of Anguilla anguilla (European freshwater eel).